A 359-amino-acid polypeptide reads, in one-letter code: Histidinol-phosphate aminotransferase (359 aa).

N6-(pyridoxal phosphate)lysine is present on K220.

The protein belongs to the class-II pyridoxal-phosphate-dependent aminotransferase family. Histidinol-phosphate aminotransferase subfamily. As to quaternary structure, homodimer. Pyridoxal 5'-phosphate serves as cofactor.

The enzyme catalyses L-histidinol phosphate + 2-oxoglutarate = 3-(imidazol-4-yl)-2-oxopropyl phosphate + L-glutamate. The protein operates within amino-acid biosynthesis; L-histidine biosynthesis; L-histidine from 5-phospho-alpha-D-ribose 1-diphosphate: step 7/9. This Neisseria gonorrhoeae (strain ATCC 700825 / FA 1090) protein is Histidinol-phosphate aminotransferase.